The following is a 346-amino-acid chain: Anthranilate phosphoribosyltransferase (346 aa).

5-phospho-alpha-D-ribose 1-diphosphate is bound by residues glycine 80, glycine 83–aspartate 84, threonine 88, asparagine 90–threonine 93, lysine 108–serine 116, and serine 120. Glycine 80 contacts anthranilate. Serine 92 provides a ligand contact to Mg(2+). Asparagine 111 is an anthranilate binding site. Arginine 166 contributes to the anthranilate binding site. Aspartate 225 and glutamate 226 together coordinate Mg(2+).

Belongs to the anthranilate phosphoribosyltransferase family. As to quaternary structure, homodimer. Requires Mg(2+) as cofactor.

The enzyme catalyses N-(5-phospho-beta-D-ribosyl)anthranilate + diphosphate = 5-phospho-alpha-D-ribose 1-diphosphate + anthranilate. It participates in amino-acid biosynthesis; L-tryptophan biosynthesis; L-tryptophan from chorismate: step 2/5. Catalyzes the transfer of the phosphoribosyl group of 5-phosphorylribose-1-pyrophosphate (PRPP) to anthranilate to yield N-(5'-phosphoribosyl)-anthranilate (PRA). The sequence is that of Anthranilate phosphoribosyltransferase from Desulforudis audaxviator (strain MP104C).